The primary structure comprises 248 residues: Polyhedrin (248 aa).

The signal sequence occupies residues 1 to 27 (MADVAGTSNRDFRGREQRLFNSEQYNY). 4 N-linked (GlcNAc...) asparagine; by host glycosylation sites follow: Asn-28, Asn-77, Asn-86, and Asn-237.

The protein resides in the host cytoplasm. Its function is as follows. Major component of the virus occlusion bodies, which are large proteinaceous structures (polyhedra), that protect the virus from the outside environment for extended periods until they are ingested by insect larvae. The polypeptide is Polyhedrin (Bombyx mori cytoplasmic polyhedrosis virus (BmCPV)).